We begin with the raw amino-acid sequence, 200 residues long: SKP1-like protein 19 (200 aa).

A compositionally biased stretch (basic and acidic residues) spans 67-92 (DDVVETHESSTKGDKTVEEAKKKPDD). The tract at residues 67-109 (DDVVETHESSTKGDKTVEEAKKKPDDVAVPESTEGDDEAEDKK) is disordered. An interaction with the F-box domain of F-box proteins region spans residues 132-190 (ILAANYLNVQGLFDLCSKTIADYIKDMTPEEVRELFNIENDFTPEEEEAIRNENAWTFE).

It belongs to the SKP1 family. Part of a SCF (SKP1-cullin-F-box) protein ligase complex. Interacts with CPR1/CPR30. Expressed in leaves and flowers.

It localises to the nucleus. Its pathway is protein modification; protein ubiquitination. Its function is as follows. Involved in ubiquitination and subsequent proteasomal degradation of target proteins. Together with CUL1, RBX1 and a F-box protein, it forms a SCF E3 ubiquitin ligase complex. The functional specificity of this complex depends on the type of F-box protein. In the SCF complex, it serves as an adapter that links the F-box protein to CUL1. This Arabidopsis thaliana (Mouse-ear cress) protein is SKP1-like protein 19 (ASK19).